The chain runs to 463 residues: tRNA-2-methylthio-N(6)-dimethylallyladenosine synthase (463 aa).

One can recognise an MTTase N-terminal domain in the interval 19–135 (GSYWITTFGC…LESLLNQVDS (117 aa)). Positions 28, 64, 98, 170, 174, and 177 each coordinate [4Fe-4S] cluster. A Radical SAM core domain is found at 156 to 393 (RDSSICGWVN…NSLVENIAKE (238 aa)). The 68-residue stretch at 396–463 (QRYKNTSQEI…RPFSLTAKLL (68 aa)) folds into the TRAM domain.

The protein belongs to the methylthiotransferase family. MiaB subfamily. As to quaternary structure, monomer. [4Fe-4S] cluster serves as cofactor.

Its subcellular location is the cytoplasm. It catalyses the reaction N(6)-dimethylallyladenosine(37) in tRNA + (sulfur carrier)-SH + AH2 + 2 S-adenosyl-L-methionine = 2-methylsulfanyl-N(6)-dimethylallyladenosine(37) in tRNA + (sulfur carrier)-H + 5'-deoxyadenosine + L-methionine + A + S-adenosyl-L-homocysteine + 2 H(+). In terms of biological role, catalyzes the methylthiolation of N6-(dimethylallyl)adenosine (i(6)A), leading to the formation of 2-methylthio-N6-(dimethylallyl)adenosine (ms(2)i(6)A) at position 37 in tRNAs that read codons beginning with uridine. The polypeptide is tRNA-2-methylthio-N(6)-dimethylallyladenosine synthase (Prochlorococcus marinus (strain NATL2A)).